The primary structure comprises 294 residues: Phosphatidylserine decarboxylase proenzyme (294 aa).

Residues Asp-92, His-149, and Ser-252 each act as charge relay system; for autoendoproteolytic cleavage activity in the active site. Catalysis depends on Ser-252, which acts as the Schiff-base intermediate with substrate; via pyruvic acid; for decarboxylase activity. Position 252 is a pyruvic acid (Ser); by autocatalysis (Ser-252).

The protein belongs to the phosphatidylserine decarboxylase family. PSD-B subfamily. Prokaryotic type I sub-subfamily. Heterodimer of a large membrane-associated beta subunit and a small pyruvoyl-containing alpha subunit. The cofactor is pyruvate. Is synthesized initially as an inactive proenzyme. Formation of the active enzyme involves a self-maturation process in which the active site pyruvoyl group is generated from an internal serine residue via an autocatalytic post-translational modification. Two non-identical subunits are generated from the proenzyme in this reaction, and the pyruvate is formed at the N-terminus of the alpha chain, which is derived from the carboxyl end of the proenzyme. The autoendoproteolytic cleavage occurs by a canonical serine protease mechanism, in which the side chain hydroxyl group of the serine supplies its oxygen atom to form the C-terminus of the beta chain, while the remainder of the serine residue undergoes an oxidative deamination to produce ammonia and the pyruvoyl prosthetic group on the alpha chain. During this reaction, the Ser that is part of the protease active site of the proenzyme becomes the pyruvoyl prosthetic group, which constitutes an essential element of the active site of the mature decarboxylase.

It is found in the cell membrane. It carries out the reaction a 1,2-diacyl-sn-glycero-3-phospho-L-serine + H(+) = a 1,2-diacyl-sn-glycero-3-phosphoethanolamine + CO2. The protein operates within phospholipid metabolism; phosphatidylethanolamine biosynthesis; phosphatidylethanolamine from CDP-diacylglycerol: step 2/2. Catalyzes the formation of phosphatidylethanolamine (PtdEtn) from phosphatidylserine (PtdSer). This chain is Phosphatidylserine decarboxylase proenzyme, found in Bordetella avium (strain 197N).